We begin with the raw amino-acid sequence, 389 residues long: MWIKGKAYYEGEIKEICINFDRSIKEIRANCKPDMTFTNEELILPASVDLHVHVRGAQLSYKETVATATSEAVYGGVGVIVDMPNTVPYINTPERIKERLREFQLYSRTDYGIYSGVSKEVEEIDKLPIAGYKIYPEDLEKEETRYVLEKSKKLKILHPEMPFVSKIERSLRRSYWMETAAINLVKGNMHITHITNFETLQLAKSMGFTTDITAHHLVVDGERDCISKVNPPIRDYVTRLKLFLKGLFEVDCIASDHAPHSKEEKRMNFDLCPPGIAGVSFSTPYIYSLMFKGLISIDRAVSLLSGNPSRILNIPTGKIKEGYRANFTVIKRENWRYTTKFSKVTETPMDGFSLDAKVTNVIVEGKLAFDGENVYPIRGVNIFDSSSRS.

2 residues coordinate Zn(2+): His51 and His53. Substrate contacts are provided by residues 53-55 and Asn85; that span reads HVR. Residues Lys133, His158, His193, and Asp256 each coordinate Zn(2+). Residue Lys133 is modified to N6-carboxylysine. Asp256 is an active-site residue. Residues His260 and 274–275 each bind substrate; that span reads PG.

This sequence belongs to the metallo-dependent hydrolases superfamily. DHOase family. Class I DHOase subfamily. It depends on Zn(2+) as a cofactor.

The catalysed reaction is (S)-dihydroorotate + H2O = N-carbamoyl-L-aspartate + H(+). Its pathway is pyrimidine metabolism; UMP biosynthesis via de novo pathway; (S)-dihydroorotate from bicarbonate: step 3/3. Functionally, catalyzes the reversible cyclization of carbamoyl aspartate to dihydroorotate. This chain is Dihydroorotase, found in Sulfolobus acidocaldarius (strain ATCC 33909 / DSM 639 / JCM 8929 / NBRC 15157 / NCIMB 11770).